The chain runs to 81 residues: Protein L83L (81 aa).

The interval 1-28 (MDTSLKNNDGALEADNKNYQDYKDEPDK) is disordered. Residues 14-28 (ADNKNYQDYKDEPDK) show a composition bias toward basic and acidic residues.

The protein belongs to the asfivirus L83L family. In terms of assembly, interacts with host IL1B.

It localises to the host cytoplasm. In terms of biological role, may subvert the host innate immune response by interacting with host IL1B and interfering with its function. This Ornithodoros (relapsing fever ticks) protein is Protein L83L.